We begin with the raw amino-acid sequence, 271 residues long: Proteasome inhibitor PI31 subunit (271 aa).

Alanine 2 is modified (N-acetylalanine). The interval 2–150 (AGLEVLFASA…PIHEQWEKAN (149 aa)) is important for homodimerization and interaction with FBXO7. Serine 153 is subject to Phosphoserine. An Omega-N-methylarginine modification is found at arginine 205. Arginine 219 carries the post-translational modification Asymmetric dimethylarginine. The interval 222–271 (IDPSSGLPNRLPPGAVPPGARFDPFGPIGTSPPGPNPDHLPPPGYDDMYL) is disordered. Omega-N-methylarginine is present on arginine 231. Positions 251–265 (TSPPGPNPDHLPPPG) are enriched in pro residues. Serine 252 is modified (phosphoserine).

It belongs to the proteasome inhibitor PI31 family. As to quaternary structure, monomer and homodimer. Interacts with FBXO7. Interacts with the 20S proteasome.

The protein localises to the cytoplasm. Its subcellular location is the endoplasmic reticulum. In terms of biological role, plays an important role in control of proteasome function. Inhibits the hydrolysis of protein and peptide substrates by the 20S proteasome. Also inhibits the activation of the proteasome by the proteasome regulatory proteins PA700 and PA28. The polypeptide is Proteasome inhibitor PI31 subunit (PSMF1) (Homo sapiens (Human)).